A 480-amino-acid chain; its full sequence is tRNA modification GTPase MnmE (480 aa).

(6S)-5-formyl-5,6,7,8-tetrahydrofolate-binding residues include Arg-20, Glu-114, and Lys-154. A TrmE-type G domain is found at Gly-250 to Glu-406. Asn-260 provides a ligand contact to K(+). Residues Asn-260–Ser-265, Ser-279–Thr-285, and Asp-304–Gly-307 each bind GTP. Ser-264 contacts Mg(2+). K(+) contacts are provided by Ser-279, Ile-281, and Thr-284. Thr-285 is a binding site for Mg(2+). Lys-480 contributes to the (6S)-5-formyl-5,6,7,8-tetrahydrofolate binding site.

The protein belongs to the TRAFAC class TrmE-Era-EngA-EngB-Septin-like GTPase superfamily. TrmE GTPase family. Homodimer. Heterotetramer of two MnmE and two MnmG subunits. The cofactor is K(+).

The protein resides in the cytoplasm. In terms of biological role, exhibits a very high intrinsic GTPase hydrolysis rate. Involved in the addition of a carboxymethylaminomethyl (cmnm) group at the wobble position (U34) of certain tRNAs, forming tRNA-cmnm(5)s(2)U34. This chain is tRNA modification GTPase MnmE, found in Rickettsia felis (strain ATCC VR-1525 / URRWXCal2) (Rickettsia azadi).